We begin with the raw amino-acid sequence, 87 residues long: MANIKSAKKRAVQSEKRRQHNASQRSMMRTYIKKVYAAVAAGEKSAAQAAFLEMQKVVDRMASKGLIHANKAANHKSKLSAQIKKLA.

Residues 1-11 (MANIKSAKKRA) are compositionally biased toward basic residues. Positions 1–27 (MANIKSAKKRAVQSEKRRQHNASQRSM) are disordered.

The protein belongs to the bacterial ribosomal protein bS20 family.

Functionally, binds directly to 16S ribosomal RNA. The chain is Small ribosomal subunit protein bS20 from Actinobacillus succinogenes (strain ATCC 55618 / DSM 22257 / CCUG 43843 / 130Z).